A 488-amino-acid polypeptide reads, in one-letter code: Annexin A7 (488 aa).

Residues 1 to 18 (MSYPGYPPTGYPPFPGYP) show a composition bias toward pro residues. Disordered stretches follow at residues 1–49 (MSYP…YPQV) and 71–150 (GYPG…NTES). A repeat-rich region region spans residues 1-143 (MSYPGYPPTG…QYPGGQPTYP (143 aa)). Residues 5 to 20 (GYPPTGYPPFPGYPPA) form a 3 X 5 AA tandem repeats of G-Y-P-P-X region. Over residues 89-102 (PGQGFGVPPGGAGF) the composition is skewed to gly residues. Annexin repeat units lie at residues 185–256 (FDAM…ALFM), 257–328 (PPTY…SMCQ), 340–412 (QMAQ…TILQ), and 416–487 (NRPA…AIVG). Lysine 233 bears the N6-acetyllysine mark.

This sequence belongs to the annexin family. In terms of assembly, interacts with PDCD6.

Its function is as follows. Calcium/phospholipid-binding protein which promotes membrane fusion and is involved in exocytosis. The chain is Annexin A7 (ANXA7) from Macaca fascicularis (Crab-eating macaque).